Consider the following 102-residue polypeptide: Exocrine gland-secreted peptide 1 (102 aa).

The N-terminal stretch at 1 to 22 is a signal peptide; the sequence is MTSLPVLLFLIILLLPSMITEG. A disulfide bridge connects residues cysteine 63 and cysteine 95.

This sequence belongs to the exocrine gland-secreted peptide family. In terms of assembly, monomer. Expressed in the extraorbital lacrimal gland from where it is secreted into tears.

Its subcellular location is the secreted. Functionally, male-specific phermone which is recognized by the Vmn2r116/V2rp5 receptor in the vomeronasal organ (VNO) and enhances female sexual receptive behavior (lordosis) upon male mounting, resulting in successful copulation. The sequence is that of Exocrine gland-secreted peptide 1 from Mus musculus (Mouse).